A 147-amino-acid polypeptide reads, in one-letter code: uncharacterized protein (147 aa).

This is an uncharacterized protein from Acidianus filamentous virus 2 (isolate Italy/Pozzuoli) (AFV-2).